The following is a 389-amino-acid chain: GTPase Obg (389 aa).

The Obg domain maps to 1 to 159 (MKFVDEAVIR…RSLKLELMLL (159 aa)). Residues 122–144 (FHGLGNTRFKSSTNRAPRQKTLG) are disordered. The region spanning 160–333 (ADVGLLGMPN…LSLKLIDFIE (174 aa)) is the OBG-type G domain. Residues 166–173 (GMPNAGKS), 191–195 (FTTLV), 213–216 (DIPG), 283–286 (NKTD), and 314–316 (SAY) contribute to the GTP site. Residues Ser173 and Thr193 each coordinate Mg(2+).

The protein belongs to the TRAFAC class OBG-HflX-like GTPase superfamily. OBG GTPase family. As to quaternary structure, monomer. It depends on Mg(2+) as a cofactor.

Its subcellular location is the cytoplasm. In terms of biological role, an essential GTPase which binds GTP, GDP and possibly (p)ppGpp with moderate affinity, with high nucleotide exchange rates and a fairly low GTP hydrolysis rate. Plays a role in control of the cell cycle, stress response, ribosome biogenesis and in those bacteria that undergo differentiation, in morphogenesis control. The polypeptide is GTPase Obg (Shewanella woodyi (strain ATCC 51908 / MS32)).